The following is a 49-amino-acid chain: Large ribosomal subunit protein bL33A (49 aa).

This sequence belongs to the bacterial ribosomal protein bL33 family.

This Geobacillus kaustophilus (strain HTA426) protein is Large ribosomal subunit protein bL33A.